A 303-amino-acid polypeptide reads, in one-letter code: N-acetyl-D-glucosamine kinase (303 aa).

ATP-binding positions include 4–11 (GFDIGGTK) and 133–140 (GVGGGLIF). Positions 157, 177, 179, and 184 each coordinate Zn(2+).

The protein belongs to the ROK (NagC/XylR) family. NagK subfamily.

The catalysed reaction is N-acetyl-D-glucosamine + ATP = N-acetyl-D-glucosamine 6-phosphate + ADP + H(+). It participates in cell wall biogenesis; peptidoglycan recycling. Functionally, catalyzes the phosphorylation of N-acetyl-D-glucosamine (GlcNAc) derived from cell-wall degradation, yielding GlcNAc-6-P. This chain is N-acetyl-D-glucosamine kinase, found in Escherichia coli O6:H1 (strain CFT073 / ATCC 700928 / UPEC).